Reading from the N-terminus, the 792-residue chain is Probable G-protein coupled receptor 156 (792 aa).

Residues 1–49 are Extracellular-facing; that stretch reads MEPEINCSEFCDSFPGQELDRRPLHDLCKTTITDSQHGSADISPLSPAL. A glycan (N-linked (GlcNAc...) asparagine) is linked at N6. A helical membrane pass occupies residues 50–70; sequence LGVIWTFLSCGLLLVLFFLAF. Over 71–86 the chain is Cytoplasmic; the sequence is TIRCRKNRIVKMSSPN. A helical transmembrane segment spans residues 87 to 107; that stretch reads LNIVTLLGSCLTYSSAYLFGI. Over 108 to 118 the chain is Extracellular; sequence QDALVGSSVEA. Residues 119–139 form a helical membrane-spanning segment; it reads LIQTRLSLLCIGTTLVFGPIL. The Cytoplasmic portion of the chain corresponds to 140 to 164; that stretch reads GKSWRLYKVFTQRVPDKRVIIKDLQ. A helical membrane pass occupies residues 165–185; sequence LLGLVAALVVADVILLVTWVL. The Extracellular segment spans residues 186-222; the sequence is TDPIQCLQILGVSMKVTGRDVSCSLTNTHFCASRYSD. The chain crosses the membrane as a helical span at residues 223–243; the sequence is VWIALVLGCKGLLLLYGAYLA. Topologically, residues 244–257 are cytoplasmic; sequence GLTNHVSSPPVNQS. Residues 258-278 traverse the membrane as a helical segment; it reads LTIMVGVNLLLLTAGLLFVVT. The Extracellular portion of the chain corresponds to 279-287; it reads RYLHSWPNL. Residues 288–308 form a helical membrane-spanning segment; sequence VFGLTSGGIFVCTTTVNCCVF. Over 309–792 the chain is Cytoplasmic; that stretch reads LPQLRQRKAF…FKDDLKPTLV (484 aa). Residues 354–390 are a coiled coil; sequence EXSCMERLLTEKNAVIESLQEQVSNAKEKLVKLMSAE. Disordered regions lie at residues 407-457, 469-516, and 538-704; these read GGPA…KYDM, GCSQ…EVLP, and DLGT…QRQP. Residues 422-434 show a composition bias toward low complexity; it reads AAAEDSLPASAAS. Basic and acidic residues-rich tracts occupy residues 443 to 457 and 474 to 486; these read SRRD…KYDM and PKAE…ERGN. Over residues 554–567 the composition is skewed to polar residues; that stretch reads PWKSNTSGSPQKLS. The segment covering 578-589 has biased composition (basic residues); it reads VRRRRAAQRARS. The span at 602 to 619 shows a compositional bias: polar residues; that stretch reads QANNTVSGSQNGLIVQNR. Basic and acidic residues predominate over residues 620–635; the sequence is DSPRLDHHNARSKEPR. Low complexity predominate over residues 675 to 704; sequence PRQPSASAPAQSSTAPCLSSXPALPRQRQP.

It belongs to the G-protein coupled receptor 3 family. GABA-B receptor subfamily. As to expression, widely expressed throughout the brain and is particularly dense in the olfactory tubercles, islands of Calleja, nucleus accumbens, piriform cortex and all fields of the hippocampus.

The protein localises to the cell membrane. Its function is as follows. Orphan G-protein coupled receptor involved in the regulation of hair cell orientation in mechanosensory organs of the inner ear. It is required to trigger a 180 degree reversal in hair cell orientation, creating a virtual line of polarity reversal (LPR) across which stereociliary bundles are arranged in opposite orientations. The sequence is that of Probable G-protein coupled receptor 156 (Gpr156) from Rattus norvegicus (Rat).